The sequence spans 106 residues: Replication protein A 14 kDa subunit B (106 aa).

Residue Met-1 is modified to N-acetylmethionine.

The protein belongs to the replication factor A protein 3 family. In terms of assembly, component of the heterotrimeric canonical replication protein A complex (RPA).

It localises to the nucleus. Its function is as follows. As part of the replication protein A (RPA/RP-A), a single-stranded DNA-binding heterotrimeric complex, may play an essential role in DNA replication, recombination and repair. Binds and stabilizes single-stranded DNA intermediates, preventing complementary DNA reannealing and recruiting different proteins involved in DNA metabolism. The sequence is that of Replication protein A 14 kDa subunit B (RPA3B) from Arabidopsis thaliana (Mouse-ear cress).